The sequence spans 345 residues: Phenylalanine--tRNA ligase alpha subunit (345 aa).

Residue E262 participates in Mg(2+) binding.

This sequence belongs to the class-II aminoacyl-tRNA synthetase family. Phe-tRNA synthetase alpha subunit type 1 subfamily. As to quaternary structure, tetramer of two alpha and two beta subunits. Requires Mg(2+) as cofactor.

It is found in the cytoplasm. It catalyses the reaction tRNA(Phe) + L-phenylalanine + ATP = L-phenylalanyl-tRNA(Phe) + AMP + diphosphate + H(+). The chain is Phenylalanine--tRNA ligase alpha subunit from Ehrlichia canis (strain Jake).